The chain runs to 314 residues: 4-hydroxy-3-methylbut-2-enyl diphosphate reductase (314 aa).

C12 contributes to the [4Fe-4S] cluster binding site. Positions 41 and 74 each coordinate (2E)-4-hydroxy-3-methylbut-2-enyl diphosphate. Positions 41 and 74 each coordinate dimethylallyl diphosphate. The isopentenyl diphosphate site is built by H41 and H74. C96 contacts [4Fe-4S] cluster. Residue H124 participates in (2E)-4-hydroxy-3-methylbut-2-enyl diphosphate binding. Dimethylallyl diphosphate is bound at residue H124. Residue H124 coordinates isopentenyl diphosphate. Catalysis depends on E126, which acts as the Proton donor. (2E)-4-hydroxy-3-methylbut-2-enyl diphosphate is bound at residue T167. C197 contacts [4Fe-4S] cluster. (2E)-4-hydroxy-3-methylbut-2-enyl diphosphate contacts are provided by S225, S226, N227, and S269. Residues S225, S226, N227, and S269 each contribute to the dimethylallyl diphosphate site. Residues S225, S226, N227, and S269 each coordinate isopentenyl diphosphate.

The protein belongs to the IspH family. The cofactor is [4Fe-4S] cluster.

The enzyme catalyses isopentenyl diphosphate + 2 oxidized [2Fe-2S]-[ferredoxin] + H2O = (2E)-4-hydroxy-3-methylbut-2-enyl diphosphate + 2 reduced [2Fe-2S]-[ferredoxin] + 2 H(+). It carries out the reaction dimethylallyl diphosphate + 2 oxidized [2Fe-2S]-[ferredoxin] + H2O = (2E)-4-hydroxy-3-methylbut-2-enyl diphosphate + 2 reduced [2Fe-2S]-[ferredoxin] + 2 H(+). Its pathway is isoprenoid biosynthesis; dimethylallyl diphosphate biosynthesis; dimethylallyl diphosphate from (2E)-4-hydroxy-3-methylbutenyl diphosphate: step 1/1. The protein operates within isoprenoid biosynthesis; isopentenyl diphosphate biosynthesis via DXP pathway; isopentenyl diphosphate from 1-deoxy-D-xylulose 5-phosphate: step 6/6. Its function is as follows. Catalyzes the conversion of 1-hydroxy-2-methyl-2-(E)-butenyl 4-diphosphate (HMBPP) into a mixture of isopentenyl diphosphate (IPP) and dimethylallyl diphosphate (DMAPP). Acts in the terminal step of the DOXP/MEP pathway for isoprenoid precursor biosynthesis. This is 4-hydroxy-3-methylbut-2-enyl diphosphate reductase from Idiomarina loihiensis (strain ATCC BAA-735 / DSM 15497 / L2-TR).